The sequence spans 139 residues: Probable disulfide formation protein C 1 (139 aa).

Residues 8–27 (EYALFTAWGASFIATLGSLY) form a helical membrane-spanning segment. Cysteine 37 and cysteine 40 are disulfide-bonded. The next 2 helical transmembrane spans lie at 42-61 (YQRIFMYPFVLWLGIAVVKK) and 68-85 (YSLPIASIGACISLYHYA). Cysteine 99 and cysteine 104 are oxidised to a cystine. The helical transmembrane segment at 113 to 135 (GFVTIPFLALIGFITIAVCSFIV) threads the bilayer.

The protein belongs to the DsbB family. BdbC subfamily.

The protein localises to the cell membrane. Required for disulfide bond formation in some proteins. In Bacillus cereus (strain ATCC 10987 / NRS 248), this protein is Probable disulfide formation protein C 1 (bdbC1).